We begin with the raw amino-acid sequence, 241 residues long: Probable transcriptional regulatory protein Rmet_0785 (241 aa).

This sequence belongs to the TACO1 family.

It is found in the cytoplasm. This Cupriavidus metallidurans (strain ATCC 43123 / DSM 2839 / NBRC 102507 / CH34) (Ralstonia metallidurans) protein is Probable transcriptional regulatory protein Rmet_0785.